The sequence spans 164 residues: Protein-export protein SecB (164 aa).

It belongs to the SecB family. In terms of assembly, homotetramer, a dimer of dimers. One homotetramer interacts with 1 SecA dimer.

The protein resides in the cytoplasm. Its function is as follows. One of the proteins required for the normal export of preproteins out of the cell cytoplasm. It is a molecular chaperone that binds to a subset of precursor proteins, maintaining them in a translocation-competent state. It also specifically binds to its receptor SecA. The sequence is that of Protein-export protein SecB from Herminiimonas arsenicoxydans.